A 947-amino-acid chain; its full sequence is Bifunctional glutamine synthetase adenylyltransferase/adenylyl-removing enzyme (947 aa).

An adenylyl removase region spans residues 1-440; it reads MTPLSSPLSQ…VFNELIGDDE (440 aa). An adenylyl transferase region spans residues 450–947; sequence SEPWREVWQD…ASWRKWLVAV (498 aa).

The protein belongs to the GlnE family. It depends on Mg(2+) as a cofactor.

It carries out the reaction [glutamine synthetase]-O(4)-(5'-adenylyl)-L-tyrosine + phosphate = [glutamine synthetase]-L-tyrosine + ADP. It catalyses the reaction [glutamine synthetase]-L-tyrosine + ATP = [glutamine synthetase]-O(4)-(5'-adenylyl)-L-tyrosine + diphosphate. In terms of biological role, involved in the regulation of glutamine synthetase GlnA, a key enzyme in the process to assimilate ammonia. When cellular nitrogen levels are high, the C-terminal adenylyl transferase (AT) inactivates GlnA by covalent transfer of an adenylyl group from ATP to specific tyrosine residue of GlnA, thus reducing its activity. Conversely, when nitrogen levels are low, the N-terminal adenylyl removase (AR) activates GlnA by removing the adenylyl group by phosphorolysis, increasing its activity. The regulatory region of GlnE binds the signal transduction protein PII (GlnB) which indicates the nitrogen status of the cell. This Salmonella newport (strain SL254) protein is Bifunctional glutamine synthetase adenylyltransferase/adenylyl-removing enzyme.